The chain runs to 291 residues: Malectin (291 aa).

Positions 1-30 (MLRPRGAEGTAVALLRLLLLLLLLGPKLRG) are cleaved as a signal peptide. Over 31-268 (PGLGVVGAAG…TPNPYASDNS (238 aa)) the chain is Lumenal. Residues Tyr81, Tyr103, Tyr130, Phe131, and Asp200 each coordinate a carbohydrate. Residues 220–264 (LQPHPGLEKKEEEEEEEEYDEGSNLKRQTNKNRVQSGPRTPNPYA) are disordered. Residues 230 to 240 (EEEEEEEEYDE) show a composition bias toward acidic residues. The segment covering 244–264 (LKRQTNKNRVQSGPRTPNPYA) has biased composition (polar residues). Asn267 carries an N-linked (GlcNAc...) asparagine glycan. The helical transmembrane segment at 269–289 (SLMFPILVAFGVFIPTLFCLC) threads the bilayer. The Cytoplasmic portion of the chain corresponds to 290 to 291 (RL).

The protein belongs to the malectin family. As to quaternary structure, interacts with the oligosaccharyltransferase (OST) complex.

The protein resides in the endoplasmic reticulum membrane. Functionally, carbohydrate-binding protein with a strong ligand preference for Glc2-N-glycan. May play a role in the early steps of protein N-glycosylation. This is Malectin from Mus musculus (Mouse).